Reading from the N-terminus, the 217-residue chain is Probable GTP-binding protein EngB (217 aa).

The EngB-type G domain maps to 44–217 (DRVEVCFAGR…TLRSIIAHLE (174 aa)). Residues 52-59 (GRSNVGKS), 79-83 (GRTQE), 97-100 (DLPG), 164-167 (TKAD), and 198-200 (TSS) each bind GTP. Positions 59 and 81 each coordinate Mg(2+).

Belongs to the TRAFAC class TrmE-Era-EngA-EngB-Septin-like GTPase superfamily. EngB GTPase family. The cofactor is Mg(2+).

In terms of biological role, necessary for normal cell division and for the maintenance of normal septation. The protein is Probable GTP-binding protein EngB of Ruegeria pomeroyi (strain ATCC 700808 / DSM 15171 / DSS-3) (Silicibacter pomeroyi).